Consider the following 133-residue polypeptide: Putative actin-depolymerizing factor 11 (133 aa).

Positions methionine 1–asparagine 133 constitute an ADF-H domain.

It belongs to the actin-binding proteins ADF family.

Its subcellular location is the cytoplasm. It localises to the cytoskeleton. In terms of biological role, actin-depolymerizing protein. Severs actin filaments (F-actin) and binds to actin monomers. The chain is Putative actin-depolymerizing factor 11 (ADF11) from Arabidopsis thaliana (Mouse-ear cress).